A 747-amino-acid polypeptide reads, in one-letter code: Oxysterol-binding protein-related protein 11 (747 aa).

N-acetylmethionine is present on methionine 1. A disordered region spans residues 1–50 (MQGGEPVSTMKVSESEGKLEGQATAVTPNKNSSCGGGISSSSSSRGGSAK). Phosphoserine is present on serine 15. Residue threonine 27 is modified to Phosphothreonine. The PH domain occupies 58–155 (MENVYGYLMK…WVSRLQICTQ (98 aa)). Tyrosine 62 is modified (phosphotyrosine). The disordered stretch occupies residues 158–188 (TEAIGKNNPPLKSRSFSLASSSNSPISQRRP). Low complexity predominate over residues 170 to 184 (SRSFSLASSSNSPIS). Phosphoserine is present on residues serine 172, serine 174, serine 177, serine 181, serine 184, and serine 189. Residues 689 to 713 (EIDKATEHKHTLEERQRTEERHRTE) are compositionally biased toward basic and acidic residues. The disordered stretch occupies residues 689-714 (EIDKATEHKHTLEERQRTEERHRTET).

The protein belongs to the OSBP family. In terms of assembly, heterodimer with OSBPL9. Present at highest levels in ovary, testis, kidney, liver, stomach, brain, and adipose tissue. Strong expression (at protein level) in epithelial cells of kidney tubules, testicular tubules, caecum, and skin. Present at low levels in subcutaneous and visceral adipose tissue (at protein level).

The protein resides in the late endosome membrane. The protein localises to the golgi apparatus. It localises to the trans-Golgi network membrane. The enzyme catalyses a 1,2-diacyl-sn-glycero-3-phospho-(1D-myo-inositol 4-phosphate)(out) + a 1,2-diacyl-sn-glycero-3-phospho-L-serine(in) = a 1,2-diacyl-sn-glycero-3-phospho-(1D-myo-inositol 4-phosphate)(in) + a 1,2-diacyl-sn-glycero-3-phospho-L-serine(out). Its function is as follows. Plays a role in regulating ADIPOQ and FABP4 levels in differentiating adipocytes and is also involved in regulation of adipocyte triglyceride storage. Weakly binds 25-hydroxycholesterol. Interacts with OSBPL9 to function as lipid transfer proteins. Together they form a heterodimer that localizes at the ER-trans-Golgi membrane contact sites, and exchanges phosphatidylserine (1,2-diacyl-sn-glycero-3-phospho-L-serine, PS) for phosphatidylinositol-4-phosphate (1,2-diacyl-sn-glycero-3-phospho-(1D-myo-inositol 4-phosphate), PI(4)P) between the two organelles, a step that is critical for sphingomyelin synthesis in the Golgi complex. The protein is Oxysterol-binding protein-related protein 11 (OSBPL11) of Homo sapiens (Human).